The chain runs to 247 residues: UPF0259 membrane protein BUsg_265 (247 aa).

A run of 6 helical transmembrane segments spans residues 20–40 (IKII…INVL), 82–102 (IFKI…IITL), 114–134 (IQFS…LNFI), 137–157 (FFIQ…SVLL), 188–208 (IVGT…TVFS), and 217–237 (FIFL…IVYL).

The protein belongs to the UPF0259 family.

It is found in the cell membrane. The protein is UPF0259 membrane protein BUsg_265 of Buchnera aphidicola subsp. Schizaphis graminum (strain Sg).